Reading from the N-terminus, the 239-residue chain is Type III pantothenate kinase (239 aa).

6–13 (DAGNTRLK) serves as a coordination point for ATP. Substrate-binding positions include Tyr-87 and 94–97 (GADR). Asp-96 acts as the Proton acceptor in catalysis. Thr-119 provides a ligand contact to ATP. Position 169 (Ser-169) interacts with substrate.

It belongs to the type III pantothenate kinase family. In terms of assembly, homodimer. It depends on NH4(+) as a cofactor. K(+) is required as a cofactor.

Its subcellular location is the cytoplasm. It carries out the reaction (R)-pantothenate + ATP = (R)-4'-phosphopantothenate + ADP + H(+). Its pathway is cofactor biosynthesis; coenzyme A biosynthesis; CoA from (R)-pantothenate: step 1/5. Functionally, catalyzes the phosphorylation of pantothenate (Pan), the first step in CoA biosynthesis. This chain is Type III pantothenate kinase, found in Laribacter hongkongensis (strain HLHK9).